We begin with the raw amino-acid sequence, 640 residues long: Calpain-5 (640 aa).

In terms of domain architecture, Calpain catalytic spans 26–343 (LFEDPLFPAT…FTDIIKCRLI (318 aa)). Active-site residues include cysteine 81, histidine 252, and asparagine 284. A domain III region spans residues 344-496 (NTSYLSIHKT…VFTDVPSNCR (153 aa)). The C2 domain occupies 499–617 (RLDEPPRTCW…HTLHLQDRSS (119 aa)).

This sequence belongs to the peptidase C2 family.

Calcium-regulated non-lysosomal thiol-protease. This is Calpain-5 (Capn5) from Mus musculus (Mouse).